Reading from the N-terminus, the 760-residue chain is Acetyl-CoA decarbonylase/synthase complex subunit alpha 1 (760 aa).

6 residues coordinate [4Fe-4S] cluster: C56, C59, C60, C62, C67, and C77. H100 contacts CO. [Ni-4Fe-4S] cluster contacts are provided by H231, C259, and C298. 2 4Fe-4S ferredoxin-type domains span residues 381-410 (KKLQ…VEAM) and 418-450 (FEGL…MIED). Residues C390, C393, C396, C400, C428, C431, C434, and C438 each contribute to the [4Fe-4S] cluster site. The [Ni-4Fe-4S] cluster site is built by C496, C525, and C560.

The protein belongs to the Ni-containing carbon monoxide dehydrogenase family. As to quaternary structure, heterotetramer of two alpha and two epsilon subunits. The ACDS complex is made up of alpha, epsilon, beta, gamma and delta subunits with a probable stoichiometry of (alpha(2)epsilon(2))(4)-beta(8)-(gamma(1)delta(1))(8). The cofactor is [4Fe-4S] cluster. Requires [Ni-4Fe-4S] cluster as cofactor.

The enzyme catalyses CO + 2 oxidized [2Fe-2S]-[ferredoxin] + H2O = 2 reduced [2Fe-2S]-[ferredoxin] + CO2 + 2 H(+). Part of the ACDS complex that catalyzes the reversible cleavage of acetyl-CoA, allowing autotrophic growth from CO(2). The alpha-epsilon subcomponent functions as a carbon monoxide dehydrogenase. The chain is Acetyl-CoA decarbonylase/synthase complex subunit alpha 1 from Methanopyrus kandleri (strain AV19 / DSM 6324 / JCM 9639 / NBRC 100938).